The primary structure comprises 447 residues: MFTKYKFLYFLFDSTFFKYWYVIPMAMKIYIEGFDEKGYGVGNNIHVPFAYPGDIVEVKVRRKGKKKIGEIVKIIEESPYRTSNKYCAHLGKCGGCLWGLMDYQYQLEFKKKVIENLFGYDKDIIPSPKTIYYRNRMDYPIYNKVSLKEPGKWYGYIPIKECKMLSKEAEIIINEFNKFIEKYKIPSWDTVKHTGFLRYLVIREGKFTKERMIHIITYKRKKFEELWDFIENIKDLVTSVYWGIREDLGDVSISEKLYHYYGSKFLRERILDIEYYISPNSFFQTNSYQAVNLVKIVKEFLEPSENDVVLDLYSGVGLFSLQIANEVKKVIGIEIVEEAVEMAKLNASINNIDAEFIASPVEKAPIIKANKIIVDPPRAGLTNKAIEYIEKINPDTIVYVSCNPYTQKRDINKLKGYKIIDMQPLDMFPNTPHIENVILMKKSRTTD.

Residues Cys87, Cys93, Cys96, and Cys162 each contribute to the [4Fe-4S] cluster site. Residues Gln284, Tyr313, Glu334, and Asp375 each contribute to the S-adenosyl-L-methionine site. Catalysis depends on Cys402, which acts as the Nucleophile.

The protein belongs to the class I-like SAM-binding methyltransferase superfamily. RNA M5U methyltransferase family.

This is an uncharacterized protein from Nanoarchaeum equitans (strain Kin4-M).